The primary structure comprises 194 residues: MKEIILATSNPGKIKELEQLLAPTICIPQADLGIFDAEETGLSFIENAILKARHASSLANKPALADDSGLVVPSLNGEPGIYSARYAGRKANDEDNIQQLLSKMADLSQEQRQAYFFCAIALMQHAKDPTPIIATGIFHGIISVKPSGTNGFGYDPVFYLNEYQCTAAELPAKIKNRISHRAKALNQLRALLPD.

8–13 provides a ligand contact to substrate; it reads TSNPGK. Residues glutamate 38 and aspartate 67 each coordinate Mg(2+). The active-site Proton acceptor is the aspartate 67. Substrate is bound by residues serine 68, 152–155, lysine 175, and 180–181; these read FGYD and HR.

Belongs to the HAM1 NTPase family. Homodimer. It depends on Mg(2+) as a cofactor.

The catalysed reaction is XTP + H2O = XMP + diphosphate + H(+). It carries out the reaction dITP + H2O = dIMP + diphosphate + H(+). The enzyme catalyses ITP + H2O = IMP + diphosphate + H(+). Functionally, pyrophosphatase that catalyzes the hydrolysis of nucleoside triphosphates to their monophosphate derivatives, with a high preference for the non-canonical purine nucleotides XTP (xanthosine triphosphate), dITP (deoxyinosine triphosphate) and ITP. Seems to function as a house-cleaning enzyme that removes non-canonical purine nucleotides from the nucleotide pool, thus preventing their incorporation into DNA/RNA and avoiding chromosomal lesions. The chain is dITP/XTP pyrophosphatase from Legionella pneumophila (strain Paris).